The following is a 458-amino-acid chain: Argininosuccinate lyase (458 aa).

It belongs to the lyase 1 family. Argininosuccinate lyase subfamily.

It is found in the cytoplasm. It catalyses the reaction 2-(N(omega)-L-arginino)succinate = fumarate + L-arginine. It participates in amino-acid biosynthesis; L-arginine biosynthesis; L-arginine from L-ornithine and carbamoyl phosphate: step 3/3. This Neisseria meningitidis serogroup C / serotype 2a (strain ATCC 700532 / DSM 15464 / FAM18) protein is Argininosuccinate lyase.